The chain runs to 659 residues: L-type lectin-domain containing receptor kinase V.7 (659 aa).

The first 25 residues, 1–25 (MSHKVLQIVLVLLLTLFSSTHNSNG), serve as a signal peptide directing secretion. The legume-lectin like stretch occupies residues 22–244 (NSNGNFLMEE…GALYYVMQFS (223 aa)). Topologically, residues 26–275 (NFLMEEAAAA…PKKSYDRTRR (250 aa)) are extracellular. 4 N-linked (GlcNAc...) asparagine glycosylation sites follow: N45, N64, N110, and N192. Residues 276–296 (ILAVCLTLAVFTALVASGIGF) traverse the membrane as a helical segment. Topologically, residues 297–659 (VFYVRHKKVK…LTNSFVSHGR (363 aa)) are cytoplasmic. A Protein kinase domain is found at 333-595 (FKEKQLLGKG…GLLCAHHTEL (263 aa)). Residues 339-347 (LGKGGFGQV) and K362 each bind ATP. D462 acts as the Proton acceptor in catalysis.

It in the C-terminal section; belongs to the protein kinase superfamily. Ser/Thr protein kinase family. In the N-terminal section; belongs to the leguminous lectin family.

The protein localises to the cell membrane. The enzyme catalyses L-seryl-[protein] + ATP = O-phospho-L-seryl-[protein] + ADP + H(+). The catalysed reaction is L-threonyl-[protein] + ATP = O-phospho-L-threonyl-[protein] + ADP + H(+). Functionally, involved in resistance response to the pathogenic oomycetes Phytophthora infestans and Phytophthora capsici and to the pathogenic bacteria Pseudomonas syringae. This chain is L-type lectin-domain containing receptor kinase V.7, found in Arabidopsis thaliana (Mouse-ear cress).